Reading from the N-terminus, the 356-residue chain is Cdc42 effector protein 4 (356 aa).

Lys5 bears the N6-methyllysine mark. At Ser18 the chain carries Phosphoserine. Positions 27–41 constitute a CRIB domain; it reads ISAPLGDFRHTMHVG. The tract at residues 51-102 is disordered; sequence SFLNSKAGEPDGESLDEQPSSSSSKRSLLSRKFRGSKRSQSVTRGEREQRDM. The residue at position 64 (Ser64) is a Phosphoserine. A compositionally biased stretch (basic residues) spans 78–87; it reads LLSRKFRGSK. 3 positions are modified to phosphoserine: Ser105, Ser109, and Ser118. 2 disordered regions span residues 122–182 and 257–356; these read LNEK…LDEQ and VAAP…EIRV. Over residues 123-132 the composition is skewed to basic and acidic residues; it reads NEKEAAEKGT. The span at 133–143 shows a compositional bias: low complexity; the sequence is SKLPKSLSSSP. A phosphoserine mark is found at Ser138, Ser140, Ser142, Ser174, Ser292, and Ser295. Residues 287–315 are compositionally biased toward low complexity; sequence AAAAPSPGSARSMGSHTTRDSSSLSSCTS. Over residues 318-344 the composition is skewed to basic and acidic residues; that stretch reads LEERSPAFRGPDRARAAVSRQPDKEFS. Residues 345 to 356 show a composition bias toward acidic residues; sequence FMDEEEEDEIRV.

This sequence belongs to the BORG/CEP family. As to quaternary structure, interacts with CDC42 and RHOQ, in a GTP-dependent manner. As to expression, not detected in any of the adult tissues tested. May be expressed only in fetal or embryonic tissues.

The protein resides in the endomembrane system. Its subcellular location is the cytoplasm. The protein localises to the cytoskeleton. Its function is as follows. Probably involved in the organization of the actin cytoskeleton. May act downstream of CDC42 to induce actin filament assembly leading to cell shape changes. Induces pseudopodia formation, when overexpressed in fibroblasts. The polypeptide is Cdc42 effector protein 4 (CDC42EP4) (Homo sapiens (Human)).